The primary structure comprises 225 residues: MTDQQLLWLLQLSDSNFPSGAFSHSFGFETYMYNEQICDAKTFREALVVYIQTQLTYTDGLACRIAYEQLEANSMEGLQRLNETLFALCLAKETREGTRMIGERLWKLCRDIYGVDELDEIVQTTRSIHPAIVFAAVGRKIGAAKQTTVLTYLFASVQTMVQNAVRGIPLGQTDGQKLLVMAQPYLIHAASIIETLDEEELGAAAVGLEIAQMQHERLPVRLFMS.

It belongs to the UreF family. As to quaternary structure, ureD, UreF and UreG form a complex that acts as a GTP-hydrolysis-dependent molecular chaperone, activating the urease apoprotein by helping to assemble the nickel containing metallocenter of UreC. The UreE protein probably delivers the nickel.

The protein localises to the cytoplasm. Required for maturation of urease via the functional incorporation of the urease nickel metallocenter. The chain is Urease accessory protein UreF from Geobacillus kaustophilus (strain HTA426).